Consider the following 349-residue polypeptide: Phenylalanine--tRNA ligase alpha subunit (349 aa).

Glutamate 258 lines the Mg(2+) pocket.

This sequence belongs to the class-II aminoacyl-tRNA synthetase family. Phe-tRNA synthetase alpha subunit type 1 subfamily. As to quaternary structure, tetramer of two alpha and two beta subunits. Requires Mg(2+) as cofactor.

The protein localises to the cytoplasm. The catalysed reaction is tRNA(Phe) + L-phenylalanine + ATP = L-phenylalanyl-tRNA(Phe) + AMP + diphosphate + H(+). The polypeptide is Phenylalanine--tRNA ligase alpha subunit (Rickettsia conorii (strain ATCC VR-613 / Malish 7)).